Consider the following 101-residue polypeptide: Small ribosomal subunit protein uS14 (101 aa).

Belongs to the universal ribosomal protein uS14 family. Part of the 30S ribosomal subunit. Contacts proteins S3 and S10.

In terms of biological role, binds 16S rRNA, required for the assembly of 30S particles and may also be responsible for determining the conformation of the 16S rRNA at the A site. The protein is Small ribosomal subunit protein uS14 of Polaromonas sp. (strain JS666 / ATCC BAA-500).